Reading from the N-terminus, the 111-residue chain is BET1-like protein (111 aa).

Residues methionine 1 to lysine 86 are Cytoplasmic-facing. Phosphoserine is present on residues serine 9 and serine 37. In terms of domain architecture, t-SNARE coiled-coil homology spans aspartate 15–methionine 77. A helical; Anchor for type IV membrane protein transmembrane segment spans residues leucine 87–serine 107. At arginine 108–threonine 111 the chain is on the lumenal side.

Component of a SNARE complex consisting of STX5, YKT6, GOSR1 and BET1L. Interacts with STX5.

The protein resides in the golgi apparatus membrane. The protein localises to the golgi apparatus. Its subcellular location is the trans-Golgi network membrane. In terms of biological role, vesicle SNARE required for targeting and fusion of retrograde transport vesicles with the Golgi complex. Required for the integrity of the Golgi complex. In Mus musculus (Mouse), this protein is BET1-like protein.